A 316-amino-acid polypeptide reads, in one-letter code: Phosducin-like protein 1 (316 aa).

Positions 1–61 are disordered; sequence MEQNILNSIL…EDGDKEYEVD (61 aa). Positions 12–41 are enriched in basic and acidic residues; the sequence is KFGDGDQERSDIRHNDSGDENDNHSDHEGN. Acidic residues predominate over residues 49 to 61; it reads EGNEDGDKEYEVD. The Phosducin domain maps to 95–290; it reads SDYAEHREKQ…LLSSYDIIPN (196 aa). Residues 102–156 adopt a coiled-coil conformation; sequence EKQKQKYLQKKYETQKMLEKMCFTTRDQPPPTEEENQLDSDDDDLERIRKARMEQ. Residues 175-316 form a thioredoxin fold region; sequence FGYFKQIDSS…RPESDDDNDD (142 aa). Residues 293 to 316 form a disordered region; sequence KAKNSNWETSLSRKRPESDDDNDD.

It belongs to the phosducin family.

The protein localises to the cytoplasm. Required for normal chemotaxis in response to cAMP and folate. Required for the heterodimerization of the G protein beta and gamma subunits gpbA and gpgA, which is itself thought to be necessary for prenylation of the gamma subunit gpgA and its association with plasma membranes. The protein is Phosducin-like protein 1 (phlp1) of Dictyostelium discoideum (Social amoeba).